The chain runs to 185 residues: Large ribosomal subunit protein uL5 (185 aa).

This sequence belongs to the universal ribosomal protein uL5 family. In terms of assembly, part of the 50S ribosomal subunit; part of the 5S rRNA/L5/L18/L25 subcomplex. Contacts the 5S rRNA and the P site tRNA. Forms a bridge to the 30S subunit in the 70S ribosome.

This is one of the proteins that bind and probably mediate the attachment of the 5S RNA into the large ribosomal subunit, where it forms part of the central protuberance. In the 70S ribosome it contacts protein S13 of the 30S subunit (bridge B1b), connecting the 2 subunits; this bridge is implicated in subunit movement. Contacts the P site tRNA; the 5S rRNA and some of its associated proteins might help stabilize positioning of ribosome-bound tRNAs. The chain is Large ribosomal subunit protein uL5 from Bartonella tribocorum (strain CIP 105476 / IBS 506).